A 95-amino-acid chain; its full sequence is Cobalt transport protein CbiN (95 aa).

2 helical membrane passes run 7-27 (IMLI…SGLG) and 67-87 (LLFA…FGYY).

Belongs to the CbiN family. As to quaternary structure, forms an energy-coupling factor (ECF) transporter complex composed of an ATP-binding protein (A component, CbiO), a transmembrane protein (T component, CbiQ) and 2 possible substrate-capture proteins (S components, CbiM and CbiN) of unknown stoichimetry.

The protein localises to the cell membrane. Its pathway is cofactor biosynthesis; adenosylcobalamin biosynthesis. Functionally, part of the energy-coupling factor (ECF) transporter complex CbiMNOQ involved in cobalt import. The chain is Cobalt transport protein CbiN from Methanothermobacter marburgensis (strain ATCC BAA-927 / DSM 2133 / JCM 14651 / NBRC 100331 / OCM 82 / Marburg) (Methanobacterium thermoautotrophicum).